Reading from the N-terminus, the 552-residue chain is MKKNRERFCNREREFVYKFKVGSQCLELRVPLRFPVQENASHLHGRLMLLHSLPCFIEKDLKEALTQFIEEESLSDYDRDAEASLEAVKSGEVDLHQLASTWAKAYAETTLEHARPEEPSWDEDFADVYHDLIHSPASETLLNLEHNYFVSISELIGERDVELKKLRERQGIEMEKVMQELGKSLTDQDVNSLAAQHFESQQDLENKWSNELKQSTAIQKQEYQEWVIKLHQDLKNPNNSSLSEEIKVQPSQFRESVEAIGRIYEEQRKLEESFTIHLGAQLKTMHNLRLLRADMLDFCKHKRNHRSGVKLHRLQTALSLYSTSLCGLVLLVDNRINSYSGIKRDFATVCQECTDFHFPRIEEQLEVVQQVVLYARTQRRSKLKESLDSGNQNGGNDDKTKNAERNYLNVLPGEFYITRHSNLSEIHVAFHLCVDDHVKSGNITARDPAIMGLRNILKVCCTHDITTISIPLLLVHDMSEEMTIPWCLRRAELVFKCVKGFMMEMASWDGGISRTVQFLVPQSISEEMFYQLSNMLPQIFRVSSTLTLTSKH.

Residues 383 to 403 form a disordered region; sequence LKESLDSGNQNGGNDDKTKNA.

Component of the FERRY complex composed of five subunits, TBCK, PPP1R21, FERRY3, CRYZL1 and GATD1 with a ratio of 1:2:1:2:4, respectively.

The protein localises to the cytoplasm. It localises to the early endosome. Its function is as follows. Component of the FERRY complex (Five-subunit Endosomal Rab5 and RNA/ribosome intermediary). The FERRY complex directly interacts with mRNAs and RAB5A, and functions as a RAB5A effector involved in the localization and the distribution of specific mRNAs most likely by mediating their endosomal transport. The complex recruits mRNAs and ribosomes to early endosomes through direct mRNA-interaction. Plays a role in mast cell degranulation. This chain is FERRY endosomal RAB5 effector complex subunit 3, found in Pongo abelii (Sumatran orangutan).